A 465-amino-acid polypeptide reads, in one-letter code: Beta-1,2-xylosyltransferase XYXT1 (465 aa).

Over 1-11 the chain is Cytoplasmic; sequence MKAAVRSKKSK. The helical; Signal-anchor for type II membrane protein transmembrane segment at 12 to 32 threads the bilayer; the sequence is GSFCHPPLLLLIVAIQFLVIY. Over 33–465 the chain is Lumenal; it reads SPTLDQYMVM…VLLKALHLLR (433 aa). N-linked (GlcNAc...) asparagine glycans are attached at residues Asn-80, Asn-118, Asn-125, Asn-266, and Asn-403.

This sequence belongs to the glycosyltransferase 61 family. As to expression, widely expressed.

The protein localises to the golgi apparatus membrane. It participates in glycan metabolism. Glycosyltransferase involved in the xylosylation of xylan, the major hemicellulose (non-cellulosic component) of primary and secondary walls of angiosperms. Possesses beta-1,2-xylosyltransferase activity, transferring xylose from UDP-xylose to the xylan backbone. Catalyzes the addition of 2-O-xylosyl side chains to the xylan backbone. The chain is Beta-1,2-xylosyltransferase XYXT1 from Oryza sativa subsp. japonica (Rice).